We begin with the raw amino-acid sequence, 318 residues long: Pyrimidine-specific ribonucleoside hydrolase RihA (318 aa).

Residue histidine 240 is part of the active site.

The protein belongs to the IUNH family. RihA subfamily.

Its function is as follows. Hydrolyzes cytidine or uridine to ribose and cytosine or uracil, respectively. In Shewanella sp. (strain MR-7), this protein is Pyrimidine-specific ribonucleoside hydrolase RihA.